We begin with the raw amino-acid sequence, 246 residues long: E3 ubiquitin-protein ligase MARCHF2 (246 aa).

An RING-CH-type zinc finger spans residues 56-116; that stretch reads DTPSDGPFCR…ELCHTEFAVE (61 aa). The segment at 56 to 116 is required for inhibition of HIV-1 virus production and VSV G protein expression; that stretch reads DTPSDGPFCR…ELCHTEFAVE (61 aa). Residues Cys64, Cys67, Cys80, Cys82, His90, Cys93, Cys106, and Cys109 each contribute to the Zn(2+) site. The interval 121-246 is required for interaction with IKBKG; that stretch reads PLTEWLKDPG…LKKVAEETPV (126 aa). 2 helical membrane passes run 138 to 158 and 175 to 195; these read LCCD…SGWL and AVGL…WTLV.

As to quaternary structure, interacts with STX6; the interaction promotes MARCHF2-mediated ubiquitination and degradation of CFTR. Interacts with MARCHF3. Interacts with GOPC/CAL; the interaction leads to CFTR ubiquitination and degradation. Interacts with CFTR; the interaction leads to CFTR ubiqtuitination and degradation. Interacts (via PDZ domain) with DLG1 (via PDZ domains); the interaction leads to DLG1 ubiqtuitination and degradation. Interacts with ERGIC3. Interacts with ADRB2. Interacts with IKBKG/NEMO; during the late stages of macrophage viral and bacterial infection; the interaction leads to ubiquitination and degradation of IKBKG/NEMO. In terms of tissue distribution, broadly expressed.

The protein localises to the endoplasmic reticulum membrane. It is found in the lysosome membrane. Its subcellular location is the endosome membrane. The protein resides in the golgi apparatus membrane. It localises to the cytoplasm. The protein localises to the cell membrane. The enzyme catalyses S-ubiquitinyl-[E2 ubiquitin-conjugating enzyme]-L-cysteine + [acceptor protein]-L-lysine = [E2 ubiquitin-conjugating enzyme]-L-cysteine + N(6)-ubiquitinyl-[acceptor protein]-L-lysine.. It functions in the pathway protein modification; protein ubiquitination. In terms of biological role, E3 ubiquitin-protein ligase that may mediate ubiquitination of TFRC and CD86, and promote their subsequent endocytosis and sorting to lysosomes via multivesicular bodies. E3 ubiquitin ligases accept ubiquitin from an E2 ubiquitin-conjugating enzyme in the form of a thioester and then directly transfer the ubiquitin to targeted substrates. Together with GOPC/CAL mediates the ubiquitination and lysosomal degradation of CFTR. Ubiquitinates and therefore mediates the degradation of DLG1. Regulates the intracellular trafficking and secretion of alpha1-antitrypsin/SERPINA1 and HP/haptoglobin via ubiquitination and degradation of the cargo receptor ERGIC3. Negatively regulates the antiviral and antibacterial immune response by repression of the NF-kB and type 1 IFN signaling pathways, via MARCHF2-mediated K48-linked polyubiquitination of IKBKG/NEMO, resulting in its proteasomal degradation. May be involved in endosomal trafficking through interaction with STX6. Its function is as follows. (Microbial infection) Positively regulates the degradation of Vesicular stomatitis virus (VSV) G protein via the lysosomal degradation pathway. Represses HIV-1 viral production and may inhibit the translocation of HIV-1 env to the cell surface, resulting in decreased viral cell-cell transmission. The protein is E3 ubiquitin-protein ligase MARCHF2 of Homo sapiens (Human).